The sequence spans 346 residues: GTPase Obg (346 aa).

An Obg domain is found at 1–159 (MRFVDEVTFV…RELRLELQLL (159 aa)). Residues 128 to 148 (LHFKSSTNRAPRQSTEGTAGE) are disordered. Residues 130–144 (FKSSTNRAPRQSTEG) show a composition bias toward polar residues. Residues 160–335 (ADVGLLGMPN…LCGDIMNDLE (176 aa)) form the OBG-type G domain. Residues 166–173 (GMPNVGKS), 191–195 (FTTLY), 213–216 (DIPG), 285–288 (NRLD), and 316–318 (SGL) contribute to the GTP site. Mg(2+) is bound by residues Ser173 and Thr193.

This sequence belongs to the TRAFAC class OBG-HflX-like GTPase superfamily. OBG GTPase family. Monomer. It depends on Mg(2+) as a cofactor.

It is found in the cytoplasm. An essential GTPase which binds GTP, GDP and possibly (p)ppGpp with moderate affinity, with high nucleotide exchange rates and a fairly low GTP hydrolysis rate. Plays a role in control of the cell cycle, stress response, ribosome biogenesis and in those bacteria that undergo differentiation, in morphogenesis control. The polypeptide is GTPase Obg (Halorhodospira halophila (strain DSM 244 / SL1) (Ectothiorhodospira halophila (strain DSM 244 / SL1))).